We begin with the raw amino-acid sequence, 285 residues long: MNTFQMRDKLKERLSHLDVDFKFNREEETLRIYRTDNNKGITIKLNAIVAKYEDKKEKIVDEIVYYVDEAIAQMADKTLESISSSQIMPVIRATSFDKKTKQGVPFIYDEHTAETAVYYAVDLGKSYRLIDESMLEDLKLTEQQIREMSLFNVRKLSNSYTTDEVKGNIFYFINSNDGYDASRILNTAFLNEIEAQCQGEMLVAVPHQDVLIIADIRNKTGYDVMAHLTMEFFTKGLVPITSLSFGYKQGHLEPIFILGKNNKQKRDPNVIQRLEANRRKFDKDK.

Belongs to the UPF0354 family.

In Staphylococcus aureus (strain COL), this protein is UPF0354 protein SACOL1793.